We begin with the raw amino-acid sequence, 674 residues long: Methionine--tRNA ligase (674 aa).

A 'HIGH' region motif is present at residues 11–21; the sequence is PYANGDLHLGH. Zn(2+) contacts are provided by Cys-142, Cys-145, Cys-155, and Cys-158. The short motif at 330 to 334 is the 'KMSKS' region element; sequence KMSKS. ATP is bound at residue Lys-333. The 101-residue stretch at 574–674 folds into the tRNA-binding domain; sequence DFMKVDLRIA…EGAQPGMRVK (101 aa).

The protein belongs to the class-I aminoacyl-tRNA synthetase family. MetG type 1 subfamily. In terms of assembly, homodimer. Requires Zn(2+) as cofactor.

It is found in the cytoplasm. It catalyses the reaction tRNA(Met) + L-methionine + ATP = L-methionyl-tRNA(Met) + AMP + diphosphate. Its function is as follows. Is required not only for elongation of protein synthesis but also for the initiation of all mRNA translation through initiator tRNA(fMet) aminoacylation. In Francisella tularensis subsp. tularensis (strain WY96-3418), this protein is Methionine--tRNA ligase.